The following is a 192-amino-acid chain: uncharacterized protein (192 aa).

Residues 29 to 160 (QRQAAVLIPV…PLDVYRRGNS (132 aa)) form the Nudix hydrolase domain. Residues 67 to 89 (GAVDSTDASLIAAALREAQEEVA) carry the Nudix box motif. Positions 83 and 87 each coordinate Mg(2+).

The protein belongs to the Nudix hydrolase family. PCD1 subfamily. It depends on Mn(2+) as a cofactor. Mg(2+) serves as cofactor.

In terms of biological role, probably mediates the hydrolysis of some nucleoside diphosphate derivatives. This is an uncharacterized protein from Salmonella agona (strain SL483).